The chain runs to 688 residues: Translation initiation factor IF-2 (688 aa).

The segment at 53–101 (GAEKPSVADEFEVEEKVVRSKKNSNKNKKKGKANEDKRQDNFAGRQQTP) is disordered. The segment covering 71–83 (RSKKNSNKNKKKG) has biased composition (basic residues). One can recognise a tr-type G domain in the interval 190–359 (ERPAVVTIMG…LLVSEVEEYK (170 aa)). The G1 stretch occupies residues 199–206 (GHVDHGKT). Residue 199–206 (GHVDHGKT) coordinates GTP. Positions 224–228 (GITQH) are G2. The segment at 245-248 (DTPG) is G3. GTP is bound by residues 245–249 (DTPGH) and 299–302 (NKMD). A G4 region spans residues 299-302 (NKMD). The interval 335 to 337 (SAI) is G5.

The protein belongs to the TRAFAC class translation factor GTPase superfamily. Classic translation factor GTPase family. IF-2 subfamily.

Its subcellular location is the cytoplasm. Functionally, one of the essential components for the initiation of protein synthesis. Protects formylmethionyl-tRNA from spontaneous hydrolysis and promotes its binding to the 30S ribosomal subunits. Also involved in the hydrolysis of GTP during the formation of the 70S ribosomal complex. This chain is Translation initiation factor IF-2, found in Bacillus mycoides (strain KBAB4) (Bacillus weihenstephanensis).